Reading from the N-terminus, the 185-residue chain is Capsid protein (185 aa).

The tract at residues 136 to 185 (NAPILSTLPETTVVRRRDRGRSPRRRTPSPRRRRSPSPRRRRSQSRESQC) is disordered. The segment covering 149-178 (VRRRDRGRSPRRRTPSPRRRRSPSPRRRRS) has biased composition (basic residues). 3 positions are modified to phosphoserine; by host: serine 157, serine 164, and serine 172. The stretch at 157 to 163 (SPRRRTP) is one 1; half-length repeat. The interval 157 to 179 (SPRRRTPSPRRRRSPSPRRRRSQ) is 3 X 8 AA repeats of S-P-R-R-R-[PR]-S-Q. Residues 160-177 (RRTPSPRRRRSPSPRRRR) carry the Bipartite nuclear localization signal motif. A run of 2 repeats spans residues 164–171 (SPRRRRSP) and 172–179 (SPRRRRSQ). Residues 179-185 (QSRESQC) form an RNA binding region.

This sequence belongs to the orthohepadnavirus core antigen family. Homodimerizes, then multimerizes. Interacts with cytosol exposed regions of viral L glycoprotein present in the reticulum-to-Golgi compartment. Interacts with human FLNB. Phosphorylated form interacts with host importin alpha; this interaction depends on the exposure of the NLS, which itself depends upon genome maturation and/or phosphorylation of the capsid protein. Interacts with host NUP153. In terms of processing, phosphorylated by host SRPK1, SRPK2, and maybe protein kinase C or GAPDH. Phosphorylation is critical for pregenomic RNA packaging. Protein kinase C phosphorylation is stimulated by HBx protein and may play a role in transport of the viral genome to the nucleus at the late step during the viral replication cycle.

Its subcellular location is the virion. The protein resides in the host cytoplasm. Its function is as follows. Self assembles to form an icosahedral capsid. Most capsids appear to be large particles with an icosahedral symmetry of T=4 and consist of 240 copies of capsid protein, though a fraction forms smaller T=3 particles consisting of 180 capsid proteins. Entering capsids are transported along microtubules to the nucleus. Phosphorylation of the capsid is thought to induce exposure of nuclear localization signal in the C-terminal portion of the capsid protein that allows binding to the nuclear pore complex via the importin (karyopherin-) alpha and beta. Capsids are imported in intact form through the nuclear pore into the nuclear basket, where it probably binds NUP153. Only capsids that contain the mature viral genome can release the viral DNA and capsid protein into the nucleoplasm. Immature capsids get stuck in the basket. Capsids encapsulate the pre-genomic RNA and the P protein. Pre-genomic RNA is reverse-transcribed into DNA while the capsid is still in the cytoplasm. The capsid can then either be directed to the nucleus, providing more genomes for transcription, or bud through the endoplasmic reticulum to provide new virions. This Hepatitis B virus genotype A2 subtype adw2 (strain Rutter 1979) (HBV-A) protein is Capsid protein.